We begin with the raw amino-acid sequence, 462 residues long: Cysteine--tRNA ligase (462 aa).

Residue C30 coordinates Zn(2+). Residues 32–42 carry the 'HIGH' region motif; sequence MTVYDYCHVGH. Positions 214, 239, and 243 each coordinate Zn(2+). Positions 271–275 match the 'KMSKS' region motif; the sequence is KMSKS. K274 lines the ATP pocket.

This sequence belongs to the class-I aminoacyl-tRNA synthetase family. In terms of assembly, monomer. The cofactor is Zn(2+).

The protein localises to the cytoplasm. It catalyses the reaction tRNA(Cys) + L-cysteine + ATP = L-cysteinyl-tRNA(Cys) + AMP + diphosphate. This chain is Cysteine--tRNA ligase, found in Cupriavidus taiwanensis (strain DSM 17343 / BCRC 17206 / CCUG 44338 / CIP 107171 / LMG 19424 / R1) (Ralstonia taiwanensis (strain LMG 19424)).